The following is a 369-amino-acid chain: Probable dual-specificity RNA methyltransferase RlmN (369 aa).

Glu-108 functions as the Proton acceptor in the catalytic mechanism. In terms of domain architecture, Radical SAM core spans 114–351; sequence YPDRATLCIS…LAQGVSCTVR (238 aa). A disulfide bond links Cys-121 and Cys-362. Residues Cys-128, Cys-132, and Cys-135 each coordinate [4Fe-4S] cluster. Residues 183-184, Ser-217, 240-242, and Asn-319 each bind S-adenosyl-L-methionine; these read GE and SLH. Cys-362 (S-methylcysteine intermediate) is an active-site residue.

This sequence belongs to the radical SAM superfamily. RlmN family. The cofactor is [4Fe-4S] cluster.

The protein resides in the cytoplasm. The catalysed reaction is adenosine(2503) in 23S rRNA + 2 reduced [2Fe-2S]-[ferredoxin] + 2 S-adenosyl-L-methionine = 2-methyladenosine(2503) in 23S rRNA + 5'-deoxyadenosine + L-methionine + 2 oxidized [2Fe-2S]-[ferredoxin] + S-adenosyl-L-homocysteine. It catalyses the reaction adenosine(37) in tRNA + 2 reduced [2Fe-2S]-[ferredoxin] + 2 S-adenosyl-L-methionine = 2-methyladenosine(37) in tRNA + 5'-deoxyadenosine + L-methionine + 2 oxidized [2Fe-2S]-[ferredoxin] + S-adenosyl-L-homocysteine. Its function is as follows. Specifically methylates position 2 of adenine 2503 in 23S rRNA and position 2 of adenine 37 in tRNAs. In Rhodococcus jostii (strain RHA1), this protein is Probable dual-specificity RNA methyltransferase RlmN.